Consider the following 372-residue polypeptide: Putative glutamate--cysteine ligase 2 (372 aa).

It belongs to the glutamate--cysteine ligase type 2 family. YbdK subfamily.

It catalyses the reaction L-cysteine + L-glutamate + ATP = gamma-L-glutamyl-L-cysteine + ADP + phosphate + H(+). Its function is as follows. ATP-dependent carboxylate-amine ligase which exhibits weak glutamate--cysteine ligase activity. This is Putative glutamate--cysteine ligase 2 from Gloeobacter violaceus (strain ATCC 29082 / PCC 7421).